The chain runs to 314 residues: Protein translocase subunit SecF (314 aa).

The next 6 helical transmembrane spans lie at 17-37, 137-157, 158-178, 188-210, 250-270, and 272-292; these read AVAVSAILVAIALISMGTRGL, QGTYAILYALLAIVAYIWWRY, ELNFGVAAVIALVHDVVITLG, SLPVLAAILTVIGYSLNDTIVVF, TLIVVAVLYFFGGEVINGFAF, and LLVGIIVGTYSSIFVASLLLV.

It belongs to the SecD/SecF family. SecF subfamily. Forms a complex with SecD. Part of the essential Sec protein translocation apparatus which comprises SecA, SecYEG and auxiliary proteins SecDF. Other proteins may also be involved.

Its subcellular location is the cell inner membrane. Part of the Sec protein translocase complex. Interacts with the SecYEG preprotein conducting channel. SecDF uses the proton motive force (PMF) to complete protein translocation after the ATP-dependent function of SecA. This is Protein translocase subunit SecF from Desulfurispirillum indicum (strain ATCC BAA-1389 / DSM 22839 / S5).